We begin with the raw amino-acid sequence, 601 residues long: Elongation factor 4 (601 aa).

Positions 7–189 constitute a tr-type G domain; it reads ELIRNFSIIA…ALVTRLPPPK (183 aa). GTP is bound by residues 19–24 and 136–139; these read DHGKST and NKID.

Belongs to the TRAFAC class translation factor GTPase superfamily. Classic translation factor GTPase family. LepA subfamily.

Its subcellular location is the cell inner membrane. The enzyme catalyses GTP + H2O = GDP + phosphate + H(+). In terms of biological role, required for accurate and efficient protein synthesis under certain stress conditions. May act as a fidelity factor of the translation reaction, by catalyzing a one-codon backward translocation of tRNAs on improperly translocated ribosomes. Back-translocation proceeds from a post-translocation (POST) complex to a pre-translocation (PRE) complex, thus giving elongation factor G a second chance to translocate the tRNAs correctly. Binds to ribosomes in a GTP-dependent manner. The sequence is that of Elongation factor 4 from Acidiphilium cryptum (strain JF-5).